Here is a 638-residue protein sequence, read N- to C-terminus: 1-deoxy-D-xylulose-5-phosphate synthase (638 aa).

Residues H79 and 120 to 122 (AHS) contribute to the thiamine diphosphate site. D151 lines the Mg(2+) pocket. Thiamine diphosphate is bound by residues 152-153 (GA), N180, Y289, and E371. Residue N180 coordinates Mg(2+).

Belongs to the transketolase family. DXPS subfamily. In terms of assembly, homodimer. The cofactor is Mg(2+). Requires thiamine diphosphate as cofactor.

It carries out the reaction D-glyceraldehyde 3-phosphate + pyruvate + H(+) = 1-deoxy-D-xylulose 5-phosphate + CO2. It participates in metabolic intermediate biosynthesis; 1-deoxy-D-xylulose 5-phosphate biosynthesis; 1-deoxy-D-xylulose 5-phosphate from D-glyceraldehyde 3-phosphate and pyruvate: step 1/1. In terms of biological role, catalyzes the acyloin condensation reaction between C atoms 2 and 3 of pyruvate and glyceraldehyde 3-phosphate to yield 1-deoxy-D-xylulose-5-phosphate (DXP). The sequence is that of 1-deoxy-D-xylulose-5-phosphate synthase from Rhizobium johnstonii (strain DSM 114642 / LMG 32736 / 3841) (Rhizobium leguminosarum bv. viciae).